The primary structure comprises 1857 residues: Phosphatidylinositol 3-kinase 2 (1857 aa).

Composition is skewed to low complexity over residues 1-32 (MKMSEGIISPLSLSSESSEQQQAAIRKFSNGS) and 42-55 (NLSVNSSNSGSNNS). Disordered regions lie at residues 1–61 (MKMS…KSST), 145–313 (TPLN…TNRV), 348–468 (SSSK…NSIR), 481–512 (ISSNGIPSSPGQVSNKDYNNIGNLSNSSGERV), and 530–573 (ESDI…GPNV). Over residues 145 to 155 (TPLNRSRSGSI) the composition is skewed to polar residues. A compositionally biased stretch (low complexity) spans 162-269 (NNLTSSSSSS…NNNNNNNSNS (108 aa)). A compositionally biased stretch (polar residues) spans 270-281 (GGSSRMITSKSQ). 2 stretches are compositionally biased toward low complexity: residues 288–311 (TSNTAATTTTTTTTNTSAPTTPTN) and 352–464 (LLIP…QPSN). A compositionally biased stretch (low complexity) spans 533-560 (ISSSPRSIGSPNSIRASISSQLPPSLSS). The span at 561–570 (IGGGGGGGSG) shows a compositional bias: gly residues. The region spanning 821-934 (PNKITIMVLL…NQTVELSLTN (114 aa)) is the PI3K-RBD domain. The segment at 996-1078 (KETNKENKDS…SGSGNGSEQP (83 aa)) is disordered. Residues 997–1011 (ETNKENKDSNKENKD) are compositionally biased toward basic and acidic residues. Residues 1012-1056 (SSSNNNNNNNNNNNNNNNNNNNNNNNNNNNGNNNGNNSNNNSNSN) show a composition bias toward low complexity. In terms of domain architecture, C2 PI3K-type spans 1099–1271 (VKRLFRVNIA…QPIILLVEFE (173 aa)). Residues 1326–1503 (PVGLKKLDLD…GLLLEGYLRS (178 aa)) form the PIK helical domain. Residues 1568 to 1845 (IIDKCRYMDS…NISVALNTKT (278 aa)) form the PI3K/PI4K catalytic domain. A G-loop region spans residues 1574–1580 (YMDSKKL). The catalytic loop stretch occupies residues 1711 to 1719 (GIGDRHSDN). Residues 1730 to 1756 (HIDFGHFLGNYKKKYGFKRERAPFIFT) are activation loop.

It belongs to the PI3/PI4-kinase family.

It carries out the reaction a 1,2-diacyl-sn-glycero-3-phospho-(1D-myo-inositol) + ATP = a 1,2-diacyl-sn-glycero-3-phospho-(1D-myo-inositol-3-phosphate) + ADP + H(+). This chain is Phosphatidylinositol 3-kinase 2 (pikB), found in Dictyostelium discoideum (Social amoeba).